The primary structure comprises 50 residues: Photosystem II reaction center protein M (50 aa).

Residues 6–26 (FGFVASLLFVGVPTIFLIGLF) form a helical membrane-spanning segment.

This sequence belongs to the PsbM family. PSII is composed of 1 copy each of membrane proteins PsbA, PsbB, PsbC, PsbD, PsbE, PsbF, PsbH, PsbI, PsbJ, PsbK, PsbL, PsbM, PsbT, PsbX, PsbY, Psb30/Ycf12, peripheral proteins PsbO, CyanoQ (PsbQ), PsbU, PsbV and a large number of cofactors. It forms dimeric complexes.

The protein localises to the cellular thylakoid membrane. Its function is as follows. One of the components of the core complex of photosystem II (PSII). PSII is a light-driven water:plastoquinone oxidoreductase that uses light energy to abstract electrons from H(2)O, generating O(2) and a proton gradient subsequently used for ATP formation. It consists of a core antenna complex that captures photons, and an electron transfer chain that converts photonic excitation into a charge separation. This subunit is found at the monomer-monomer interface. This Prochlorococcus marinus (strain MIT 9215) protein is Photosystem II reaction center protein M.